The primary structure comprises 1562 residues: MIIFRKSFFTFWLLLNSVLALVITQNRVDRGTLDLSVGDITINSGASWSIINNAISTLVGSLTVQPNAGLYITSTSPLLSLQVTLTSLLSTIQNNGIIAFNSSPSLTSSTYNLVGLSLVNTGEMYFSASGVLPSVMALTAASWSNSGLMAFYQNQRSSGVVSLGTPLGSITNNGQICLNNEVYQQTTSINGSGCFTANRDSTIYIANVLLPVSTSQNFYLADSQSSIIVQAILTPQVFNVYGFGNGNMVGVTLPLLGNILNPAYSYNPSTGILRLRNLLVYQDFNIGPGYNPSLFSIVTDNGAGLPSTILGSVSYSGPVPPRALPASCKIACKPVPTAPGTNPTEYTTTITTTNSAGKPLTETGVVDISTDSNGSWFSSTTIFPTSSSSSSSSSTVSSTAPSSSSTKPSSSSQPSSTPPPSSSSKASSTTPSSSSQSSSTTPSSSSKPSSTVPPTGSSQSSSTIPSSSTQPSSTAPSSLSSPSSSTTPSSSSQSSFSAQSSIGQTSSSTVSSSSSQPSSSQPSSSQSSSATTSSSSQFSSSAPPSSTQSSFTAESSNSQLSSTTPSSSTEASSTVPSSSSQLSSSVPLTNSVSLSSVSSSDNGSSSASSPSSSQSSIASTAESSSTFPSSSDQQSSSIQSPSSQESSVSSTPTSSLQSSTNTISSSQDSSSFSPTTSDNSSTNSASSLSTLSSSDTSVSNPSTSNVSSTDNTQSSVASATPTDSAISATSSDITTEFTTTWEVTNSDGSVSTESGIVSESGTSFTTITTFPPPTTSSDITTEFTTTWEVTNSDGSVSTESGIVSESGTSFTTITTFPPPTTSSDITTEFTTTWEVTNSDGSVSTESGIVSESGTSFTTITTFPPPTTSSDITTEFTTTWEVTNSDGSVSTESGIVSESGTSFTTITTFPPPTSSSVAADVTTEFTTTWEVTNSDGSVSTESGIVSESGTSFTTITTFELPVVCKRDDISCGPATSATNSDTAAQDPTSDATAIESEFTTTWTTTNSDGSVETNSGVVSQSGSSLTTITTFAPDATSEYTTSWTTTNSDGSVATNSGVVSQSGTSFTTITTFEPPVVCKRDDISCGPATSAMNSDTAAQQLTSGMTATETEFASTWVVTKSDGSVFTESGIVGQSGTSFTTLTTFAPTTSSGAVQTEYTSTWEVTNTDGSVSTKSGIIDQSGTYFTTLSTFAPTTISGAIETEFTSTWVATDTDGLVSTKSGIVSQSGTSIATLTIFPEPAGTVYPVTTLFTTEYVTTCPNGELSTATGVVVVSTDSKGIEQTVTSVVPSTVYTKETVTSIITHCIKNKCFESTTTLVSSVPCPTQVPGVFTSTDNGHGVPIASIDVTTGAATVSNTIKAQDSTGFTSAGNAITTAITATGAVTTSVGGQGSTDYSNAGNTIAAGSGSDSGSGSGSGSGSGSSSNTVGIVNPKVSSAASGITVAAASASAGQSWPYSSGGSGNGVLPSGANNVGSNQTPTVSGGNSNPSTVTGAAVGAGGVVSGSPSYSGNSLLISFVSSQSGAISSSTGVTIPIATENSGSKFSVGKSAFIAIILTTFIGFI.

Positions 1 to 20 (MIIFRKSFFTFWLLLNSVLA) are cleaved as a signal peptide. The N-linked (GlcNAc...) asparagine glycan is linked to asparagine 190. Positions 338-353 (APGTNPTEYTTTITTT) are enriched in low complexity. The disordered stretch occupies residues 338–366 (APGTNPTEYTTTITTTNSAGKPLTETGVV). Asparagine 373 carries N-linked (GlcNAc...) asparagine glycosylation. Composition is skewed to low complexity over residues 383 to 415 (FPTSSSSSSSSSTVSSTAPSSSSTKPSSSSQPS) and 422 to 729 (SSSK…ISAT). 3 disordered regions span residues 383–729 (FPTS…ISAT), 1404–1424 (GSGSDSGSGSGSGSGSGSSSN), and 1455–1486 (YSSGGSGNGVLPSGANNVGSNQTPTVSGGNSN). Asparagine 602, asparagine 679, and asparagine 705 each carry an N-linked (GlcNAc...) asparagine glycan. Positions 1407–1419 (SDSGSGSGSGSGS) are enriched in gly residues. A compositionally biased stretch (polar residues) spans 1468 to 1486 (GANNVGSNQTPTVSGGNSN). Asparagine 1538 carries the GPI-anchor amidated asparagine lipid modification. Positions 1539-1562 (SGSKFSVGKSAFIAIILTTFIGFI) are cleaved as a propeptide — removed in mature form.

Belongs to the HYR1/IFF family. The GPI-anchor is attached to the protein in the endoplasmic reticulum and serves to target the protein to the cell surface. There, the glucosamine-inositol phospholipid moiety is cleaved off and the GPI-modified mannoprotein is covalently attached via its lipidless GPI glycan remnant to the 1,6-beta-glucan of the outer cell wall layer.

The protein resides in the secreted. It is found in the cell wall. It localises to the membrane. Its function is as follows. GPI-anchored cell wall protein involved in cell wall organization, hyphal growth, as well as in host-fungal interaction and virulence. In Candida albicans (strain SC5314 / ATCC MYA-2876) (Yeast), this protein is Cell wall protein RBR3 (RBR3).